A 78-amino-acid chain; its full sequence is Translation initiation factor IF-1, chloroplastic (78 aa).

The S1-like domain maps to 1–73; it reads MASNRELIEM…TKGRIIYRLR (73 aa).

Belongs to the IF-1 family. Component of the 30S ribosomal translation pre-initiation complex which assembles on the 30S ribosome in the order IF-2 and IF-3, IF-1 and N-formylmethionyl-tRNA(fMet); mRNA recruitment can occur at any time during PIC assembly.

The protein resides in the plastid. The protein localises to the chloroplast. Its function is as follows. One of the essential components for the initiation of protein synthesis. Stabilizes the binding of IF-2 and IF-3 on the 30S subunit to which N-formylmethionyl-tRNA(fMet) subsequently binds. Helps modulate mRNA selection, yielding the 30S pre-initiation complex (PIC). Upon addition of the 50S ribosomal subunit IF-1, IF-2 and IF-3 are released leaving the mature 70S translation initiation complex. The protein is Translation initiation factor IF-1, chloroplastic of Ostreococcus tauri.